A 968-amino-acid chain; its full sequence is RNA polymerase-associated protein RapA (968 aa).

One can recognise a Helicase ATP-binding domain in the interval 164–334 (DVGRRHAPRV…FARLRLLDPN (171 aa)). An ATP-binding site is contributed by 177 to 184 (DEVGLGKT). Residues 280–283 (DEAH) carry the DEAH box motif. Residues 490–685 (RVEWLMGYLT…ALKAQLEQGR (196 aa)) enclose the Helicase C-terminal domain.

Belongs to the SNF2/RAD54 helicase family. RapA subfamily. As to quaternary structure, interacts with the RNAP. Has a higher affinity for the core RNAP than for the holoenzyme. Its ATPase activity is stimulated by binding to RNAP.

Transcription regulator that activates transcription by stimulating RNA polymerase (RNAP) recycling in case of stress conditions such as supercoiled DNA or high salt concentrations. Probably acts by releasing the RNAP, when it is trapped or immobilized on tightly supercoiled DNA. Does not activate transcription on linear DNA. Probably not involved in DNA repair. The polypeptide is RNA polymerase-associated protein RapA (Salmonella paratyphi A (strain ATCC 9150 / SARB42)).